Reading from the N-terminus, the 69-residue chain is Ribosome modulation factor (69 aa).

This sequence belongs to the ribosome modulation factor family.

The protein resides in the cytoplasm. Its function is as follows. During stationary phase, converts 70S ribosomes to an inactive dimeric form (100S ribosomes). This is Ribosome modulation factor from Hahella chejuensis (strain KCTC 2396).